Consider the following 2664-residue polypeptide: Non-reducing polyketide synthase sorB (2664 aa).

Residues 21-45 (KSAPQSGNTADDIPNAASQPDTTST) are disordered. The segment covering 36 to 45 (AASQPDTTST) has biased composition (polar residues). Residues 112-281 (ADHARRLAEW…TTPSRIASDL (170 aa)) form an N-terminal acylcarrier protein transacylase domain (SAT) region. Catalysis depends on C184, which acts as the Nucleophile; for transacylase activity. H302 functions as the Proton donor/acceptor; for transacylase activity in the catalytic mechanism. The 422-residue stretch at 428–849 (DNDIAVIGMS…GSNASMVIKQ (422 aa)) folds into the Ketosynthase family 3 (KS3) domain. Residues C596, H731, and H772 each act as for beta-ketoacyl synthase activity in the active site. The interval 961-1276 (CFGGQVSKSV…TQGTRQLADV (316 aa)) is malonyl-CoA:ACP transacylase (MAT) domain. The tract at residues 1345–1477 (PGLYTFMGYG…GQLEFHRADD (133 aa)) is N-terminal hotdog fold. The PKS/mFAS DH domain maps to 1345–1663 (PGLYTFMGYG…FSARSMSELF (319 aa)). The product template (PT) domain stretch occupies residues 1376-1548 (VSGYTLGKTV…PSESAGRAVK (173 aa)). The segment at 1507–1663 (DEVIQGQSIY…FSARSMSELF (157 aa)) is C-terminal hotdog fold. A Carrier domain is found at 1711–1785 (TELWAKLLPV…GILAFLQSTL (75 aa)). S1745 carries the post-translational modification O-(pantetheine 4'-phosphoryl)serine. Residues 1789 to 1820 (GEDDASQSSDAASSSRNTPPSSNDGILATPSP) form a disordered region. Positions 1794–1803 (SQSSDAASSS) are enriched in low complexity. Residues 2015-2197 (FQLMADFLSR…DAGYKHVEWT (183 aa)) form a methyltransferase domain region. The segment at 2281–2526 (VTGTTGSLGS…TLRSFPAVEG (246 aa)) is NADPH-binding (R) domain.

The cofactor is pantetheine 4'-phosphate.

Its pathway is secondary metabolite biosynthesis. Its function is as follows. Non-reducing polyketide synthase; part of the gene cluster that mediates the biosynthesis of sorbicillinoids, a diverse group of yellow secondary metabolites that restrict growth of competing pathogenic fungi but not of bacteria. Sorbicillinoids biosynthesis requires the action of two PKSs. SorA iteratively combines three acetyl units and the growing chain is modified by the ketoacyl reductase subunit, and optional by the enoyl reductase subunit in the second cycle. The polyketide is then handed over to the PKS SorB, which adds three more acetyl units, and two methyl groups. SorB releases an aldehyde, which undergoes spontaneous cyclization resulting in the formation of sorbicillin or 2',3'-dihydrosorbicillin. The monooxygenase sorC oxidizes sorbicillin and 2',3'-dihydrosorbicillin to 2',3'-dihydrosorbicillinol and sorbicillinol, respectively. The oxidoreductase sorD further converts sorbicillinol into oxosorbicillinol. Sorbicillinol is the building block for the other sorbicillinoids such as disorbicillinol, bisvertinolon, and dihydrobisvertinolone. The sequence is that of Non-reducing polyketide synthase sorB from Penicillium rubens (strain ATCC 28089 / DSM 1075 / NRRL 1951 / Wisconsin 54-1255) (Penicillium chrysogenum).